The sequence spans 99 residues: Keratinocyte differentiation-associated protein (99 aa).

The signal sequence occupies residues 1-22; that stretch reads MKIPVLPAVVLLSLLALHSAQG.

Highly expressed in skin, but not detectable in any other tissue examined. Expression restricted to cornified/stratified epithelia and not detected in non-cornified/stratified epithelia.

The protein resides in the secreted. Its function is as follows. May act as a soluble regulator of keratinocyte differentiation. May play an important role in embryonic skin morphogenesis. In Canis lupus familiaris (Dog), this protein is Keratinocyte differentiation-associated protein.